The chain runs to 466 residues: Glutamate--tRNA ligase 2 (466 aa).

A 'HIGH' region motif is present at residues 9-19 (PSPTGYLHVGG). Residues 234 to 238 (PLSKR) carry the 'KMSKS' region motif. Lysine 237 contributes to the ATP binding site.

It belongs to the class-I aminoacyl-tRNA synthetase family. Glutamate--tRNA ligase type 1 subfamily. In terms of assembly, monomer.

It localises to the cytoplasm. The enzyme catalyses tRNA(Glu) + L-glutamate + ATP = L-glutamyl-tRNA(Glu) + AMP + diphosphate. Functionally, catalyzes the attachment of glutamate to tRNA(Glu) in a two-step reaction: glutamate is first activated by ATP to form Glu-AMP and then transferred to the acceptor end of tRNA(Glu). In Pseudothermotoga lettingae (strain ATCC BAA-301 / DSM 14385 / NBRC 107922 / TMO) (Thermotoga lettingae), this protein is Glutamate--tRNA ligase 2.